Here is a 174-residue protein sequence, read N- to C-terminus: Inactive protein RESTRICTED TEV MOVEMENT 1 (174 aa).

The Jacalin-type lectin domain maps to 1–152 (MKIGPVGKHD…LQYIGVYLRP (152 aa)).

This sequence belongs to the jacalin lectin family. As to quaternary structure, self-interacts. Interacts with RTM3.

Its subcellular location is the cytoplasm. Functionally, unable to mediate restriction of long-distance movement of the pathogenic tobacco etch virus (TEV) without causing a hypersensitive response or inducing systemic acquired resistance. This chain is Inactive protein RESTRICTED TEV MOVEMENT 1 (RTM1), found in Arabidopsis thaliana (Mouse-ear cress).